The chain runs to 633 residues: Chaperone protein HtpG (633 aa).

An a; substrate-binding region spans residues 1–341; the sequence is MSATSSKETL…SADLPLNVSR (341 aa). The segment at 342–558 is b; the sequence is EILQSSRDID…EGDMSANLER (217 aa). The c stretch occupies residues 559–633; the sequence is LLKAAGQAAP…LNGLLAMLPG (75 aa).

The protein belongs to the heat shock protein 90 family. As to quaternary structure, homodimer.

It is found in the cytoplasm. Functionally, molecular chaperone. Has ATPase activity. The polypeptide is Chaperone protein HtpG (Thiobacillus denitrificans (strain ATCC 25259 / T1)).